The sequence spans 370 residues: Peptidyl-prolyl cis-trans isomerase D (370 aa).

Ser5 carries the phosphoserine modification. Residues 19-183 (FFDVDIGGER…KLCVIAECGE (165 aa)) enclose the PPIase cyclophilin-type domain. Residue Lys171 is modified to N6-acetyllysine. Residues 185–215 (KEGDDGGIFPKDGSGDSHPDFPEDADIDLKD) are chaperone activity. A Phosphoserine modification is found at Ser198. The interaction with HSP90AB1 stretch occupies residues 214 to 370 (KDVDKILLIT…EKAVYAKMFA (157 aa)). TPR repeat units lie at residues 223 to 256 (TEDLKNIGNTFFKSQNWEMAIKKYAEVLRYVDSS), 273 to 306 (LSCVLNIGACKLKMSNWQGAIDSCLEALELDPSN), and 307 to 340 (TKALYRRAQGWQGLKEYDQALADLKKAQGIAPED).

Belongs to the cyclophilin-type PPIase family. PPIase D subfamily. As to quaternary structure, identified in ESR1 or NR3C1/GCR steroid receptor-chaperone complexes. Found in HSP90 chaperone complexes with kinase clients LCK or EIF2AK1. Two monomers associate with one HSP90 homodimer. Interacts with HSP90AA1. Interacts with HSP90AB1; PPID and FKBP4 compete for binding to HSP90AB1 and the interaction is mutually exclusive with the PPID:HSPA8 interaction. Interacts with HSPA8; PPID and STIP1 but not FKBP4 compete for binding to HSPA8 and the interaction is mutually exclusive with the PPID:HSP90AB1 interaction. Interacts with S100A1 and S100A2; the interactions dissociate the PPID:HSP90AA1 interaction. Interacts with S100A6. Interacts with MYB, ILF2, XRCC6, RACK1 and RPS3. Interacts with cytoplasmic dynein 1 intermediate chain (DYNC1I1 or DYNC1I2). In terms of tissue distribution, widely expressed.

The protein localises to the cytoplasm. Its subcellular location is the nucleus. It localises to the nucleolus. The protein resides in the nucleoplasm. The enzyme catalyses [protein]-peptidylproline (omega=180) = [protein]-peptidylproline (omega=0). With respect to regulation, less sensitive to inhibition by cyclosporin A than is CYP-18. Its function is as follows. PPIase that catalyzes the cis-trans isomerization of proline imidic peptide bonds in oligopeptides and may therefore assist protein folding. Proposed to act as a co-chaperone in HSP90 complexes such as in unligated steroid receptors heterocomplexes. Different co-chaperones seem to compete for association with HSP90 thus establishing distinct HSP90-co-chaperone-receptor complexes with the potential to exert tissue-specific receptor activity control. May have a preference for estrogen receptor complexes and is not found in glucocorticoid receptor complexes. May be involved in cytoplasmic dynein-dependent movement of the receptor from the cytoplasm to the nucleus. May regulate MYB by inhibiting its DNA-binding activity. Involved in regulation of AHR signaling by promoting the formation of the AHR:ARNT dimer; the function is independent of HSP90 but requires the chaperone activity. Involved in regulation of UV radiation-induced apoptosis. Promotes cell viability in anaplastic lymphoma kinase-positive anaplastic large-cell lymphoma (ALK+ ALCL) cell lines. Functionally, (Microbial infection) May be involved in hepatitis C virus (HCV) replication and release. This chain is Peptidyl-prolyl cis-trans isomerase D, found in Homo sapiens (Human).